The primary structure comprises 546 residues: Chromosomal replication initiator protein DnaA (546 aa).

The domain I, interacts with DnaA modulators stretch occupies residues 1–85 (MSDPQAALRA…TRALSQHMGR (85 aa)). The tract at residues 85–204 (RPCSLAVTIA…EPAHNPNREK (120 aa)) is domain II. The span at 96–111 (PPQPAPQEEPPAPAPQ) shows a compositional bias: pro residues. A disordered region spans residues 96–209 (PPQPAPQEEP…PNREKSLNPK (114 aa)). Residues 126-145 (QTQAFQQPTQSTQPAPASQP) are compositionally biased toward low complexity. Over residues 191 to 209 (IPREEPAHNPNREKSLNPK) the composition is skewed to basic and acidic residues. Residues 205-421 (SLNPKHTFEN…GALIRVSAYS (217 aa)) are domain III, AAA+ region. Residues glycine 249, glycine 251, lysine 252, and threonine 253 each coordinate ATP. The domain IV, binds dsDNA stretch occupies residues 422 to 546 (SLVNEPISLE…TQRVKNHNQR (125 aa)).

This sequence belongs to the DnaA family. In terms of assembly, oligomerizes as a right-handed, spiral filament on DNA at oriC.

It is found in the cytoplasm. Functionally, plays an essential role in the initiation and regulation of chromosomal replication. ATP-DnaA binds to the origin of replication (oriC) to initiate formation of the DNA replication initiation complex once per cell cycle. Binds the DnaA box (a 9 base pair repeat at the origin) and separates the double-stranded (ds)DNA. Forms a right-handed helical filament on oriC DNA; dsDNA binds to the exterior of the filament while single-stranded (ss)DNA is stabiized in the filament's interior. The ATP-DnaA-oriC complex binds and stabilizes one strand of the AT-rich DNA unwinding element (DUE), permitting loading of DNA polymerase. After initiation quickly degrades to an ADP-DnaA complex that is not apt for DNA replication. Binds acidic phospholipids. The sequence is that of Chromosomal replication initiator protein DnaA from Corynebacterium aurimucosum (strain ATCC 700975 / DSM 44827 / CIP 107346 / CN-1) (Corynebacterium nigricans).